Here is a 354-residue protein sequence, read N- to C-terminus: Protein angel (354 aa).

Residues 22–59 are disordered; it reads VSSQAKGASGKRKQKAKEMESSHDRNRRWTSLGNQAEG.

Belongs to the CCR4/nocturin family. As to expression, ubiquitously expressed in embryos.

This Drosophila melanogaster (Fruit fly) protein is Protein angel (angel).